The sequence spans 363 residues: Fructose-1,6-bisphosphate aldolase/phosphatase (363 aa).

Aspartate 11 (proton acceptor; for FBP phosphatase activity) is an active-site residue. Mg(2+)-binding residues include aspartate 11, histidine 18, aspartate 51, and aspartate 52. Histidine 18 contributes to the beta-D-fructose 1,6-bisphosphate binding site. Histidine 18 contributes to the dihydroxyacetone phosphate binding site. Tyrosine 89 provides a ligand contact to beta-D-fructose 1,6-bisphosphate. Residue glutamine 93 participates in Mg(2+) binding. 102–103 is a binding site for beta-D-fructose 1,6-bisphosphate; sequence GN. Position 130 (aspartate 130) interacts with Mg(2+). Residue lysine 131 coordinates beta-D-fructose 1,6-bisphosphate. Position 131 (lysine 131) interacts with dihydroxyacetone phosphate. Catalysis depends on tyrosine 230, which acts as the Proton donor/acceptor; for FBP aldolase activity. Lysine 233, aspartate 234, and aspartate 235 together coordinate Mg(2+). The active-site Schiff-base intermediate with DHAP; for FBP aldolase activity is the lysine 233. Beta-D-fructose 1,6-bisphosphate is bound by residues 243 to 244, arginine 267, and tyrosine 348; that span reads QK. Arginine 267 is a dihydroxyacetone phosphate binding site.

This sequence belongs to the FBP aldolase/phosphatase family. As to quaternary structure, homooctamer; dimer of tetramers. Requires Mg(2+) as cofactor.

The enzyme catalyses beta-D-fructose 1,6-bisphosphate + H2O = beta-D-fructose 6-phosphate + phosphate. It catalyses the reaction beta-D-fructose 1,6-bisphosphate = D-glyceraldehyde 3-phosphate + dihydroxyacetone phosphate. It participates in carbohydrate biosynthesis; gluconeogenesis. Its function is as follows. Catalyzes two subsequent steps in gluconeogenesis: the aldol condensation of dihydroxyacetone phosphate (DHAP) and glyceraldehyde-3-phosphate (GA3P) to fructose-1,6-bisphosphate (FBP), and the dephosphorylation of FBP to fructose-6-phosphate (F6P). The chain is Fructose-1,6-bisphosphate aldolase/phosphatase from Thermus thermophilus (strain ATCC BAA-163 / DSM 7039 / HB27).